The sequence spans 278 residues: Orotidine 5'-phosphate decarboxylase (278 aa).

Lys95 (proton donor) is an active-site residue.

This sequence belongs to the OMP decarboxylase family. Type 2 subfamily.

It catalyses the reaction orotidine 5'-phosphate + H(+) = UMP + CO2. The protein operates within pyrimidine metabolism; UMP biosynthesis via de novo pathway; UMP from orotate: step 2/2. The sequence is that of Orotidine 5'-phosphate decarboxylase from Methylibium petroleiphilum (strain ATCC BAA-1232 / LMG 22953 / PM1).